The following is a 274-amino-acid chain: Kit ligand (274 aa).

A signal peptide spans 1-25 (MKKTQTWIITCIYLQLLLFNPLVRT). The residue at position 26 (glutamine 26) is a Pyrrolidone carboxylic acid. Residues 26 to 215 (QGICRNRVTD…SDSIEDSSLQ (190 aa)) are Extracellular-facing. 2 disulfides stabilise this stretch: cysteine 29–cysteine 114 and cysteine 68–cysteine 164. N-linked (GlcNAc...) asparagine glycans are attached at residues asparagine 90, asparagine 97, asparagine 145, and asparagine 196. The chain crosses the membrane as a helical span at residues 216–238 (WAAVALPAFFSLVIGFAFGALYW). The Cytoplasmic segment spans residues 239 to 274 (KKKQPNLTRTVENIQINEEDNEISMLQEKEREFQEV).

It belongs to the SCF family. In terms of assembly, homodimer, non-covalently linked. Heterotetramer with KIT, binding two KIT molecules; thereby mediates KIT dimerization and subsequent activation by autophosphorylation. Post-translationally, a soluble form is produced by proteolytic processing of the extracellular domain.

The protein localises to the cytoplasm. It localises to the cytoskeleton. Its subcellular location is the cell membrane. It is found in the cell projection. The protein resides in the lamellipodium. The protein localises to the filopodium. It localises to the secreted. Functionally, ligand for the receptor-type protein-tyrosine kinase KIT. Plays an essential role in the regulation of cell survival and proliferation, hematopoiesis, stem cell maintenance, gametogenesis, mast cell development, migration and function, and in melanogenesis. KITLG/SCF binding can activate several signaling pathways. Promotes phosphorylation of PIK3R1, the regulatory subunit of phosphatidylinositol 3-kinase, and subsequent activation of the kinase AKT1. KITLG/SCF and KIT also transmit signals via GRB2 and activation of RAS, RAF1 and the MAP kinases MAPK1/ERK2 and/or MAPK3/ERK1. KITLG/SCF and KIT promote activation of STAT family members STAT1, STAT3 and STAT5. KITLG/SCF and KIT promote activation of PLCG1, leading to the production of the cellular signaling molecules diacylglycerol and inositol 1,4,5-trisphosphate. KITLG/SCF acts synergistically with other cytokines, probably interleukins. The sequence is that of Kit ligand (KITLG) from Sus scrofa (Pig).